A 538-amino-acid polypeptide reads, in one-letter code: Fructooligosaccharide ABC transporter substrate-binding protein FusA (538 aa).

Residues 1-22 form the signal peptide; it reads MKFKTFSKSAVLLTASLAVLAA. Cysteine 23 carries N-palmitoyl cysteine lipidation. Cysteine 23 carries the S-diacylglycerol cysteine lipid modification. Position 167 (glutamate 167) interacts with substrate. Ca(2+)-binding residues include aspartate 215, asparagine 217, asparagine 219, glutamate 221, aspartate 223, and glutamate 224. Residue asparagine 235 participates in substrate binding. 4 residues coordinate Ca(2+): aspartate 263, phenylalanine 264, aspartate 267, and asparagine 268. Substrate is bound by residues tryptophan 314, asparagine 318, lysine 353, tryptophan 384, arginine 419, and glutamate 423.

Belongs to the bacterial solute-binding protein 1 family. As to quaternary structure, the complex is composed of two ATP-binding proteins (MsmK), two transmembrane proteins (FusB and FusC) and a solute-binding protein (FusA).

The protein resides in the cell membrane. Part of the ABC transporter complex FusABC-MsmK involved in short- and long-chain fructooligosaccharide (FOS) import. Required for the utilization of long-chain FOSs. Binds kestose, nystose, fructofuranosyl-nystose and inulin, but not sucrose. Has a preference for long-chain FOSs (tetrasaccharides and larger). This is Fructooligosaccharide ABC transporter substrate-binding protein FusA from Streptococcus pneumoniae serotype 4 (strain ATCC BAA-334 / TIGR4).